The chain runs to 510 residues: Inositol-3-phosphate synthase (510 aa).

Residues Gly70, Gly71, Asn72, Asn73, Asp143, Ile180, Gln190, Arg193, Thr230, Ala231, Asn232, Thr233, Gly281, Ser282, Asp306, Ser309, Asn340, Asn341, Asp342, Lys355, Gly393, Asp394, Asp422, and Ser423 each coordinate NAD(+).

The protein belongs to the myo-inositol 1-phosphate synthase family. NAD(+) serves as cofactor.

It is found in the cytoplasm. The protein resides in the cytosol. It localises to the nucleus. The catalysed reaction is D-glucose 6-phosphate = 1D-myo-inositol 3-phosphate. The protein operates within polyol metabolism; myo-inositol biosynthesis; myo-inositol from D-glucose 6-phosphate: step 1/2. Functionally, key enzyme in myo-inositol biosynthesis pathway that catalyzes the conversion of glucose 6-phosphate to 1-myo-inositol 1-phosphate in a NAD-dependent manner. The protein is Inositol-3-phosphate synthase (TUR1) of Spirodela polyrhiza (Giant duckweed).